We begin with the raw amino-acid sequence, 776 residues long: Protein translocase subunit SecA 2 (776 aa).

ATP is bound by residues Gln-80, 98-102 (GEGKT), and Asp-486.

This sequence belongs to the SecA family. In terms of assembly, monomer and homodimer. Part of the essential Sec protein translocation apparatus which comprises SecA, SecYEG and auxiliary proteins SecDF. Other proteins may also be involved.

Its subcellular location is the cell membrane. It localises to the cytoplasm. The catalysed reaction is ATP + H2O + cellular proteinSide 1 = ADP + phosphate + cellular proteinSide 2.. Functionally, part of the Sec protein translocase complex. Interacts with the SecYEG preprotein conducting channel. Has a central role in coupling the hydrolysis of ATP to the transfer of proteins into and across the cell membrane, serving as an ATP-driven molecular motor driving the stepwise translocation of polypeptide chains across the membrane. This chain is Protein translocase subunit SecA 2, found in Listeria innocua serovar 6a (strain ATCC BAA-680 / CLIP 11262).